The following is a 327-amino-acid chain: 4-hydroxy-2-oxoglutarate aldolase, mitochondrial (327 aa).

The transit peptide at 1–25 directs the protein to the mitochondrion; the sequence is MLVPRVWSSVRLGLSRVLSRTLRGW. 77–78 is a substrate binding site; the sequence is SN. Lysine 196 (schiff-base intermediate with substrate) is an active-site residue. The substrate site is built by serine 198 and glycine 222.

This sequence belongs to the DapA family. As to quaternary structure, homotetramer.

Its subcellular location is the mitochondrion. It catalyses the reaction (4S)-4-hydroxy-2-oxoglutarate = glyoxylate + pyruvate. It carries out the reaction (4R)-4-hydroxy-2-oxoglutarate = glyoxylate + pyruvate. Its activity is regulated as follows. Inhibited by divalent cations. Functionally, catalyzes the final step in the metabolic pathway of hydroxyproline. This Bos taurus (Bovine) protein is 4-hydroxy-2-oxoglutarate aldolase, mitochondrial (HOGA1).